Consider the following 436-residue polypeptide: 3-ketoacyl-CoA thiolase (436 aa).

The active-site Acyl-thioester intermediate is the Cys-99. Residues His-392 and Cys-422 each act as proton acceptor in the active site.

It belongs to the thiolase-like superfamily. Thiolase family. Heterotetramer of two alpha chains (FadJ) and two beta chains (FadI).

It localises to the cytoplasm. It carries out the reaction an acyl-CoA + acetyl-CoA = a 3-oxoacyl-CoA + CoA. The protein operates within lipid metabolism; fatty acid beta-oxidation. Its function is as follows. Catalyzes the final step of fatty acid oxidation in which acetyl-CoA is released and the CoA ester of a fatty acid two carbons shorter is formed. In Escherichia coli (strain K12 / MC4100 / BW2952), this protein is 3-ketoacyl-CoA thiolase.